The sequence spans 130 residues: Small ribosomal subunit protein uS9 (130 aa).

A disordered region spans residues 101 to 130; sequence AGLLTRDARMKERKKPGLKKARKASQFSKR. Residues 111–130 are compositionally biased toward basic residues; it reads KERKKPGLKKARKASQFSKR.

Belongs to the universal ribosomal protein uS9 family.

This Levilactobacillus brevis (strain ATCC 367 / BCRC 12310 / CIP 105137 / JCM 1170 / LMG 11437 / NCIMB 947 / NCTC 947) (Lactobacillus brevis) protein is Small ribosomal subunit protein uS9.